A 732-amino-acid chain; its full sequence is 1,4-alpha-glucan branching enzyme GlgB 1 (732 aa).

The Nucleophile role is filled by D411. Residue E464 is the Proton donor of the active site.

The protein belongs to the glycosyl hydrolase 13 family. GlgB subfamily. In terms of assembly, monomer.

The catalysed reaction is Transfers a segment of a (1-&gt;4)-alpha-D-glucan chain to a primary hydroxy group in a similar glucan chain.. The protein operates within glycan biosynthesis; glycogen biosynthesis. Functionally, catalyzes the formation of the alpha-1,6-glucosidic linkages in glycogen by scission of a 1,4-alpha-linked oligosaccharide from growing alpha-1,4-glucan chains and the subsequent attachment of the oligosaccharide to the alpha-1,6 position. The polypeptide is 1,4-alpha-glucan branching enzyme GlgB 1 (Xanthomonas oryzae pv. oryzae (strain KACC10331 / KXO85)).